The primary structure comprises 668 residues: DNA damage-responsive serine/threonine-protein kinase RqkA (668 aa).

The Protein kinase domain maps to 13–272 (YELLALLGEG…SGAALAHLWA (260 aa)). Residues 19–27 (LGEGGSAQV) and lysine 42 contribute to the ATP site. Aspartate 137 serves as the catalytic Proton acceptor.

Belongs to the protein kinase superfamily. Ser/Thr protein kinase family. Pyrroloquinoline quinone serves as cofactor. In terms of processing, autophosphorylated.

The catalysed reaction is L-seryl-[protein] + ATP = O-phospho-L-seryl-[protein] + ADP + H(+). The enzyme catalyses L-threonyl-[protein] + ATP = O-phospho-L-threonyl-[protein] + ADP + H(+). With respect to regulation, autokinase activity is stimulated by DNA damage. Stimulated by PQQ and DNA ends in vitro. Plays an important role in radiation resistance and DNA double-strand break (DSB) repair. Involved in transcriptional regulation of genes important for bacterial stress response. Phosphorylates PprA in vitro. The polypeptide is DNA damage-responsive serine/threonine-protein kinase RqkA (rqkA) (Deinococcus radiodurans (strain ATCC 13939 / DSM 20539 / JCM 16871 / CCUG 27074 / LMG 4051 / NBRC 15346 / NCIMB 9279 / VKM B-1422 / R1)).